The following is a 500-amino-acid chain: Aspartyl/glutamyl-tRNA(Asn/Gln) amidotransferase subunit B (500 aa).

Belongs to the GatB/GatE family. GatB subfamily. Heterotrimer of A, B and C subunits.

It carries out the reaction L-glutamyl-tRNA(Gln) + L-glutamine + ATP + H2O = L-glutaminyl-tRNA(Gln) + L-glutamate + ADP + phosphate + H(+). It catalyses the reaction L-aspartyl-tRNA(Asn) + L-glutamine + ATP + H2O = L-asparaginyl-tRNA(Asn) + L-glutamate + ADP + phosphate + 2 H(+). Allows the formation of correctly charged Asn-tRNA(Asn) or Gln-tRNA(Gln) through the transamidation of misacylated Asp-tRNA(Asn) or Glu-tRNA(Gln) in organisms which lack either or both of asparaginyl-tRNA or glutaminyl-tRNA synthetases. The reaction takes place in the presence of glutamine and ATP through an activated phospho-Asp-tRNA(Asn) or phospho-Glu-tRNA(Gln). The protein is Aspartyl/glutamyl-tRNA(Asn/Gln) amidotransferase subunit B of Clavibacter michiganensis subsp. michiganensis (strain NCPPB 382).